Here is a 568-residue protein sequence, read N- to C-terminus: AT-rich interactive domain-containing protein 3B (568 aa).

At M1 the chain carries N-acetylmethionine. A compositionally biased stretch (low complexity) spans 1–22; the sequence is MEPLQQQQQQQQQKQPQQPLLQ. Positions 1–174 are disordered; sequence MEPLQQQQQQ…SVPTAGQPSW (174 aa). S87 carries the post-translational modification Phosphoserine. Acidic residues predominate over residues 88–107; it reads EPEEEEGGLEDEDGDDDVAE. The segment covering 151-160 has biased composition (basic and acidic residues); the sequence is TKEDHTKDAS. Residues 201–374 are interaction with RB1; that stretch reads SRDFAKLYEL…SSPKIRFSIL (174 aa). One can recognise an ARID domain in the interval 213–305; the sequence is DPERKEFLDD…YLYAYECEKK (93 aa). The residue at position 309 (S309) is a Phosphoserine. R370 bears the Asymmetric dimethylarginine mark. The segment at 378–403 is disordered; that stretch reads SSSGTSASSPRIPPASTLRKGDGVPV. The region spanning 425–522 is the REKLES domain; sequence GPLEHLRERL…GVLFAQKPVV (98 aa). The interval 495-518 is interaction with ARID3A; the sequence is SNIGSINMSVDIDGTTYTGVLFAQ. The segment covering 529–559 has biased composition (low complexity); sequence TPQSIGSSASSSNSSSSHCSPSPTSSRGTPS. A disordered region spans residues 529–568; sequence TPQSIGSSASSSNSSSSHCSPSPTSSRGTPSAEPSTSWSL.

As to quaternary structure, heterodimer with ARID3A. Interacts with unphosphorylated RB1. Expressed at high levels in testis. Also expressed in prostate, thyroid and thymus.

It is found in the nucleus. Functionally, transcription factor involved in the production of cranial mesenchymal tissues. Favors nuclear targeting of ARID3A. This chain is AT-rich interactive domain-containing protein 3B (Arid3b), found in Mus musculus (Mouse).